Consider the following 188-residue polypeptide: UPF0301 protein PD_1276 (188 aa).

This sequence belongs to the UPF0301 (AlgH) family.

In Xylella fastidiosa (strain Temecula1 / ATCC 700964), this protein is UPF0301 protein PD_1276.